The chain runs to 511 residues: Putative CBL-interacting protein kinase 13 (511 aa).

The 255-residue stretch at 25–279 (FEVGKLLGQG…AEGIMENEWF (255 aa)) folds into the Protein kinase domain. ATP is bound by residues 31–39 (LGQGNFAKV) and Lys-54. Residue Asp-147 is the Proton acceptor of the active site. Positions 165–194 (DFGLSAVADGMRRDGLFHTFCGTPAYVAPE) are activation loop. The tract at residues 307-340 (VDAPTSPPDTPRTVDSGDVGAAPTRPRKAGSLTS) is disordered. In terms of domain architecture, NAF spans 321-383 (DSGDVGAAPT…PGFDLSGLFD (63 aa)). The interval 400 to 429 (KHTARFVSAAPVEVIVATLEAAAAAAGMAV) is PPI.

The protein belongs to the protein kinase superfamily. CAMK Ser/Thr protein kinase family. SNF1 subfamily. The cofactor is Mn(2+).

It catalyses the reaction L-seryl-[protein] + ATP = O-phospho-L-seryl-[protein] + ADP + H(+). The enzyme catalyses L-threonyl-[protein] + ATP = O-phospho-L-threonyl-[protein] + ADP + H(+). Functionally, CIPK serine-threonine protein kinases interact with CBL proteins. Binding of a CBL protein to the regulatory NAF domain of CIPK protein lead to the activation of the kinase in a calcium-dependent manner. This is Putative CBL-interacting protein kinase 13 (CIPK13) from Oryza sativa subsp. japonica (Rice).